The sequence spans 353 residues: Photosystem II protein D1 (353 aa).

An N-acetylthreonine modification is found at T2. The residue at position 2 (T2) is a Phosphothreonine. 3 helical membrane passes run 29–46, 118–133, and 142–156; these read YIGW…TATS, HFLL…EWEL, and WIAV…AATA. H118 lines the chlorophyll a pocket. Residue Y126 participates in pheophytin a binding. [CaMn4O5] cluster-binding residues include D170 and E189. A helical membrane pass occupies residues 197 to 218; the sequence is FHMLGVAGVFGGSLFSAMHGSL. A chlorophyll a-binding site is contributed by H198. Residues H215 and 264 to 265 contribute to the a quinone site; that span reads SF. H215 provides a ligand contact to Fe cation. Fe cation is bound at residue H272. Residues 274 to 288 traverse the membrane as a helical segment; it reads FLAAWPVVGIWFTAL. H332, E333, D342, and A344 together coordinate [CaMn4O5] cluster. Positions 345 to 353 are excised as a propeptide; the sequence is AIEAPATNG.

This sequence belongs to the reaction center PufL/M/PsbA/D family. As to quaternary structure, PSII is composed of 1 copy each of membrane proteins PsbA, PsbB, PsbC, PsbD, PsbE, PsbF, PsbH, PsbI, PsbJ, PsbK, PsbL, PsbM, PsbT, PsbX, PsbY, PsbZ, Psb30/Ycf12, at least 3 peripheral proteins of the oxygen-evolving complex and a large number of cofactors. It forms dimeric complexes. Requires The D1/D2 heterodimer binds P680, chlorophylls that are the primary electron donor of PSII, and subsequent electron acceptors. It shares a non-heme iron and each subunit binds pheophytin, quinone, additional chlorophylls, carotenoids and lipids. D1 provides most of the ligands for the Mn4-Ca-O5 cluster of the oxygen-evolving complex (OEC). There is also a Cl(-1) ion associated with D1 and D2, which is required for oxygen evolution. The PSII complex binds additional chlorophylls, carotenoids and specific lipids. as cofactor. Tyr-161 forms a radical intermediate that is referred to as redox-active TyrZ, YZ or Y-Z. In terms of processing, C-terminally processed by CTPA; processing is essential to allow assembly of the oxygen-evolving complex and thus photosynthetic growth.

It is found in the plastid membrane. It catalyses the reaction 2 a plastoquinone + 4 hnu + 2 H2O = 2 a plastoquinol + O2. In terms of biological role, photosystem II (PSII) is a light-driven water:plastoquinone oxidoreductase that uses light energy to abstract electrons from H(2)O, generating O(2) and a proton gradient subsequently used for ATP formation. It consists of a core antenna complex that captures photons, and an electron transfer chain that converts photonic excitation into a charge separation. The D1/D2 (PsbA/PsbD) reaction center heterodimer binds P680, the primary electron donor of PSII as well as several subsequent electron acceptors. This Cuscuta reflexa (Southern Asian dodder) protein is Photosystem II protein D1.